A 434-amino-acid chain; its full sequence is ATP-dependent protease ATPase subunit HslU (434 aa).

ATP-binding positions include Ile-18, 60–65 (GVGKTE), Asp-247, Glu-312, and Arg-384.

This sequence belongs to the ClpX chaperone family. HslU subfamily. A double ring-shaped homohexamer of HslV is capped on each side by a ring-shaped HslU homohexamer. The assembly of the HslU/HslV complex is dependent on binding of ATP.

The protein resides in the cytoplasm. In terms of biological role, ATPase subunit of a proteasome-like degradation complex; this subunit has chaperone activity. The binding of ATP and its subsequent hydrolysis by HslU are essential for unfolding of protein substrates subsequently hydrolyzed by HslV. HslU recognizes the N-terminal part of its protein substrates and unfolds these before they are guided to HslV for hydrolysis. This Brucella melitensis biotype 1 (strain ATCC 23456 / CCUG 17765 / NCTC 10094 / 16M) protein is ATP-dependent protease ATPase subunit HslU.